A 332-amino-acid chain; its full sequence is Cyclin-D1-binding protein 1 (332 aa).

A2 carries the N-acetylalanine modification. Interaction with TCF3 regions lie at residues 2–184 (ASAT…VDFV) and 150–332 (ISYN…CLLD). Interaction with RPLP0 stretches follow at residues 2 to 190 (ASAT…AHEE) and 240 to 332 (LIIP…CLLD). A required for interaction with CCND1 region spans residues 2-208 (ASATAPAAAA…DPYSGLLNDT (207 aa)).

Belongs to the CCNDBP1 family. As to quaternary structure, interacts with CCND1 and GRAP2. May also interact with COPS5, RPLP0, SIRT6, SYF2 and TCF3. In terms of processing, phosphorylated.

It localises to the cytoplasm. It is found in the nucleus. May negatively regulate cell cycle progression. May act at least in part via inhibition of the cyclin-D1/CDK4 complex, thereby preventing phosphorylation of RB1 and blocking E2F-dependent transcription. The chain is Cyclin-D1-binding protein 1 (CCNDBP1) from Macaca fascicularis (Crab-eating macaque).